Here is an 87-residue protein sequence, read N- to C-terminus: Putative RNase MJ1548 (87 aa).

Active-site residues include arginine 65 and histidine 70. The short motif at arginine 65–tyrosine 72 is the RX(4)HXY motif element. O-di-AMP-tyrosine is present on tyrosine 72.

Belongs to the HepT RNase toxin family. In terms of assembly, homodimer, probably forms a complex with cognate antitoxin MJ1547. In terms of processing, modified by cognate antitoxin MJ1547; probably at least 2 successive AMPylation events occur on Tyr-72.

Its function is as follows. Probable toxic component of a putative type VII toxin-antitoxin (TA) system, probably an RNase. Probably neutralized by cognate antitoxin MJ1547. Neutralization may be due to AMPylation by antitoxin MJ1547. The polypeptide is Putative RNase MJ1548 (Methanocaldococcus jannaschii (strain ATCC 43067 / DSM 2661 / JAL-1 / JCM 10045 / NBRC 100440) (Methanococcus jannaschii)).